Here is a 648-residue protein sequence, read N- to C-terminus: MDDTDKRVHKYIEKHDLIRSDDKLLVAVSGGPDSLALLHFLWNSNLVPKEAISVAHLNHHLRENAANEQNVVETFCESQGIPFYIEEVDVKSRAESLQKGIEETARIVRYDFFEKVMAEKKINKLALAHHADDQIETILMRLVRGSASIGWSGIQPKRELKGGQAIRPFLPITKAEIIDYAQKHELAYEIDESNTSQEYTRNRYRAQLLPFLKQENPAVYSHFERFSEETSEDFQFLEALASDLLKKNLIKNGKRTTLLLTNFKNEANPLQRRAIHLLLRYLYNEDASFITVNHIYQIIQMIQSDNPSSSIDLPNKLVANRAYDKLHFQFGEREAPSEFYHQLELNDRIELDNKASIRLKLKSSVVQTNGLNGMLLDAEEITLPLIVRNRVNGDRMTMKGQAGSKKLKDIFIDAKIPRQERDKLPVITDYTGKILWVPGVKKSAYDREFSRSKKQYIIRYTRNIGGNESMHNDIQKVLISEDELQEKIRELGRELTTEYEGRNPLVVGVLKGATPFMTDLLKRVDTYLEMDFMDVSSYGNGTVSSGEVKIIKDLNASVEGRDVLVIEDIIDSGRTLSYLVDLIKYRKAKSVKLVTLLDKPAGRNVEIEADYVGFVVPNEFVVGYGLDYAERYRNLPYIGILKPEIYSE.

Position 29–34 (29–34) interacts with ATP; it reads SGGPDS. Residue Asp627 coordinates Mg(2+).

In the N-terminal section; belongs to the tRNA(Ile)-lysidine synthase family. It in the C-terminal section; belongs to the purine/pyrimidine phosphoribosyltransferase family. Requires Mg(2+) as cofactor.

The protein resides in the cytoplasm. It catalyses the reaction IMP + diphosphate = hypoxanthine + 5-phospho-alpha-D-ribose 1-diphosphate. The catalysed reaction is GMP + diphosphate = guanine + 5-phospho-alpha-D-ribose 1-diphosphate. It carries out the reaction cytidine(34) in tRNA(Ile2) + L-lysine + ATP = lysidine(34) in tRNA(Ile2) + AMP + diphosphate + H(+). In terms of biological role, ligates lysine onto the cytidine present at position 34 of the AUA codon-specific tRNA(Ile) that contains the anticodon CAU, in an ATP-dependent manner. Cytidine is converted to lysidine, thus changing the amino acid specificity of the tRNA from methionine to isoleucine. The protein is Bifunctional protein TilS/HprT (tilS/hprT) of Listeria monocytogenes serotype 4b (strain F2365).